A 201-amino-acid polypeptide reads, in one-letter code: Probable nicotinate-nucleotide adenylyltransferase (201 aa).

It belongs to the NadD family.

The catalysed reaction is nicotinate beta-D-ribonucleotide + ATP + H(+) = deamido-NAD(+) + diphosphate. It participates in cofactor biosynthesis; NAD(+) biosynthesis; deamido-NAD(+) from nicotinate D-ribonucleotide: step 1/1. In terms of biological role, catalyzes the reversible adenylation of nicotinate mononucleotide (NaMN) to nicotinic acid adenine dinucleotide (NaAD). The chain is Probable nicotinate-nucleotide adenylyltransferase from Neisseria gonorrhoeae (strain ATCC 700825 / FA 1090).